The sequence spans 562 residues: Putative transport protein YE1478 (562 aa).

Transmembrane regions (helical) follow at residues 8–28 (LLNG…LCLG), 32–52 (LGPI…LLGQ), 66–86 (FMLF…SIFF), 94–114 (MLAL…GKLF), 118–138 (IGLT…LVGA), and 158–178 (NLSL…ILGA). 2 RCK C-terminal domains span residues 202 to 288 (LDTD…SFRN) and 290 to 373 (KEVF…KIGF). 5 helical membrane passes run 383–403 (LLAF…TFQF), 406–426 (FSFG…LGFL), 447–467 (FGLM…INSS), 475–495 (MLIS…IFGA), and 541–561 (IANV…PGIL).

It belongs to the AAE transporter (TC 2.A.81) family. YbjL subfamily.

The protein localises to the cell membrane. The sequence is that of Putative transport protein YE1478 from Yersinia enterocolitica serotype O:8 / biotype 1B (strain NCTC 13174 / 8081).